The following is a 440-amino-acid chain: Thymidine phosphorylase (440 aa).

It belongs to the thymidine/pyrimidine-nucleoside phosphorylase family. As to quaternary structure, homodimer.

The enzyme catalyses thymidine + phosphate = 2-deoxy-alpha-D-ribose 1-phosphate + thymine. The protein operates within pyrimidine metabolism; dTMP biosynthesis via salvage pathway; dTMP from thymine: step 1/2. Its function is as follows. The enzymes which catalyze the reversible phosphorolysis of pyrimidine nucleosides are involved in the degradation of these compounds and in their utilization as carbon and energy sources, or in the rescue of pyrimidine bases for nucleotide synthesis. The protein is Thymidine phosphorylase of Salmonella paratyphi A (strain ATCC 9150 / SARB42).